Consider the following 141-residue polypeptide: Nucleoside diphosphate kinase (141 aa).

Residues K11, F59, R87, T93, R104, and N114 each contribute to the ATP site. Catalysis depends on H117, which acts as the Pros-phosphohistidine intermediate.

It belongs to the NDK family. As to quaternary structure, homotetramer. Mg(2+) is required as a cofactor.

It is found in the cytoplasm. It carries out the reaction a 2'-deoxyribonucleoside 5'-diphosphate + ATP = a 2'-deoxyribonucleoside 5'-triphosphate + ADP. It catalyses the reaction a ribonucleoside 5'-diphosphate + ATP = a ribonucleoside 5'-triphosphate + ADP. In terms of biological role, major role in the synthesis of nucleoside triphosphates other than ATP. The ATP gamma phosphate is transferred to the NDP beta phosphate via a ping-pong mechanism, using a phosphorylated active-site intermediate. The polypeptide is Nucleoside diphosphate kinase (Actinobacillus succinogenes (strain ATCC 55618 / DSM 22257 / CCUG 43843 / 130Z)).